The following is a 415-amino-acid chain: Multidrug resistance protein MdtA (415 aa).

Residues 1–21 (MKGSYKSRWVIVIVVVIAAIA) form the signal peptide. 2 disordered regions span residues 32–60 (SRSA…GPLA) and 392–415 (EAQS…GARS). Residues 399 to 415 (PEEKATSREYAKKGARS) show a composition bias toward basic and acidic residues.

The protein belongs to the membrane fusion protein (MFP) (TC 8.A.1) family. In terms of assembly, part of a tripartite efflux system composed of MdtA, MdtB and MdtC.

The protein localises to the cell inner membrane. The MdtABC tripartite complex confers resistance against novobiocin and deoxycholate. This is Multidrug resistance protein MdtA from Escherichia coli (strain 55989 / EAEC).